The primary structure comprises 1290 residues: DNA-directed RNA polymerase subunit beta' (1290 aa).

Residues Cys60, Cys62, Cys75, and Cys78 each contribute to the Zn(2+) site. The Mg(2+) site is built by Asp535, Asp537, and Asp539. Cys875, Cys953, Cys960, and Cys963 together coordinate Zn(2+).

It belongs to the RNA polymerase beta' chain family. As to quaternary structure, the RNAP catalytic core consists of 2 alpha, 1 beta, 1 beta' and 1 omega subunit. When a sigma factor is associated with the core the holoenzyme is formed, which can initiate transcription. It depends on Mg(2+) as a cofactor. The cofactor is Zn(2+).

The catalysed reaction is RNA(n) + a ribonucleoside 5'-triphosphate = RNA(n+1) + diphosphate. Functionally, DNA-dependent RNA polymerase catalyzes the transcription of DNA into RNA using the four ribonucleoside triphosphates as substrates. The chain is DNA-directed RNA polymerase subunit beta' from Nocardioides sp. (strain ATCC BAA-499 / JS614).